We begin with the raw amino-acid sequence, 421 residues long: Imidazolonepropionase (421 aa).

Positions 80 and 82 each coordinate Fe(3+). Zn(2+) is bound by residues His80 and His82. 4-imidazolone-5-propanoate-binding residues include Arg89, Tyr152, and His185. Tyr152 contributes to the N-formimidoyl-L-glutamate binding site. His249 contributes to the Fe(3+) binding site. His249 provides a ligand contact to Zn(2+). Residue Glu252 coordinates 4-imidazolone-5-propanoate. A Fe(3+)-binding site is contributed by Asp324. Asp324 is a Zn(2+) binding site. N-formimidoyl-L-glutamate contacts are provided by Asn326 and Gly328. Ser329 contacts 4-imidazolone-5-propanoate.

Belongs to the metallo-dependent hydrolases superfamily. HutI family. Zn(2+) is required as a cofactor. The cofactor is Fe(3+).

It is found in the cytoplasm. It catalyses the reaction 4-imidazolone-5-propanoate + H2O = N-formimidoyl-L-glutamate. The protein operates within amino-acid degradation; L-histidine degradation into L-glutamate; N-formimidoyl-L-glutamate from L-histidine: step 3/3. Its function is as follows. Catalyzes the hydrolytic cleavage of the carbon-nitrogen bond in imidazolone-5-propanoate to yield N-formimidoyl-L-glutamate. It is the third step in the universal histidine degradation pathway. This Bacillus velezensis (strain DSM 23117 / BGSC 10A6 / LMG 26770 / FZB42) (Bacillus amyloliquefaciens subsp. plantarum) protein is Imidazolonepropionase.